Here is a 945-residue protein sequence, read N- to C-terminus: Bifunctional glutamine synthetase adenylyltransferase/adenylyl-removing enzyme (945 aa).

The tract at residues 1–440 (MMPLSPQLQQ…VFNELIGDDE (440 aa)) is adenylyl removase. The adenylyl transferase stretch occupies residues 449–945 (AEYWRELWQD…SASWQKWLMA (497 aa)).

Belongs to the GlnE family. The cofactor is Mg(2+).

The enzyme catalyses [glutamine synthetase]-O(4)-(5'-adenylyl)-L-tyrosine + phosphate = [glutamine synthetase]-L-tyrosine + ADP. The catalysed reaction is [glutamine synthetase]-L-tyrosine + ATP = [glutamine synthetase]-O(4)-(5'-adenylyl)-L-tyrosine + diphosphate. Its function is as follows. Involved in the regulation of glutamine synthetase GlnA, a key enzyme in the process to assimilate ammonia. When cellular nitrogen levels are high, the C-terminal adenylyl transferase (AT) inactivates GlnA by covalent transfer of an adenylyl group from ATP to specific tyrosine residue of GlnA, thus reducing its activity. Conversely, when nitrogen levels are low, the N-terminal adenylyl removase (AR) activates GlnA by removing the adenylyl group by phosphorolysis, increasing its activity. The regulatory region of GlnE binds the signal transduction protein PII (GlnB) which indicates the nitrogen status of the cell. In Klebsiella pneumoniae subsp. pneumoniae (strain ATCC 700721 / MGH 78578), this protein is Bifunctional glutamine synthetase adenylyltransferase/adenylyl-removing enzyme.